Reading from the N-terminus, the 310-residue chain is N-acetyl-gamma-glutamyl-phosphate reductase (310 aa).

Cys-117 is a catalytic residue.

This sequence belongs to the NAGSA dehydrogenase family. Type 2 subfamily.

It localises to the cytoplasm. It catalyses the reaction N-acetyl-L-glutamate 5-semialdehyde + phosphate + NADP(+) = N-acetyl-L-glutamyl 5-phosphate + NADPH + H(+). It functions in the pathway amino-acid biosynthesis; L-arginine biosynthesis; N(2)-acetyl-L-ornithine from L-glutamate: step 3/4. In terms of biological role, catalyzes the NADPH-dependent reduction of N-acetyl-5-glutamyl phosphate to yield N-acetyl-L-glutamate 5-semialdehyde. This chain is N-acetyl-gamma-glutamyl-phosphate reductase, found in Rhizobium etli (strain ATCC 51251 / DSM 11541 / JCM 21823 / NBRC 15573 / CFN 42).